Reading from the N-terminus, the 201-residue chain is Large ribosomal subunit protein bL25 (201 aa).

The protein belongs to the bacterial ribosomal protein bL25 family. CTC subfamily. As to quaternary structure, part of the 50S ribosomal subunit; part of the 5S rRNA/L5/L18/L25 subcomplex. Contacts the 5S rRNA. Binds to the 5S rRNA independently of L5 and L18.

In terms of biological role, this is one of the proteins that binds to the 5S RNA in the ribosome where it forms part of the central protuberance. The polypeptide is Large ribosomal subunit protein bL25 (Akkermansia muciniphila (strain ATCC BAA-835 / DSM 22959 / JCM 33894 / BCRC 81048 / CCUG 64013 / CIP 107961 / Muc)).